We begin with the raw amino-acid sequence, 144 residues long: Cell division protein SepF (144 aa).

Positions 14–31 (EDDEMNEVPYTESEEQQE) are enriched in acidic residues. The segment at 14–41 (EDDEMNEVPYTESEEQQEEIPQTQKNER) is disordered.

This sequence belongs to the SepF family. As to quaternary structure, homodimer. Interacts with FtsZ.

Its subcellular location is the cytoplasm. Cell division protein that is part of the divisome complex and is recruited early to the Z-ring. Probably stimulates Z-ring formation, perhaps through the cross-linking of FtsZ protofilaments. Its function overlaps with FtsA. This is Cell division protein SepF from Lactobacillus johnsonii (strain CNCM I-12250 / La1 / NCC 533).